The following is a 439-amino-acid chain: Protein CNPPD1 (439 aa).

Residues 231-251 (CLLGVVYLTGFAAVFTSIAVV) form a helical membrane-spanning segment. The tract at residues 283 to 302 (ALAPEQPQPKLPDVSPPSST) is disordered.

It belongs to the CNPPD1 family.

It localises to the membrane. The chain is Protein CNPPD1 (CNPPD1) from Gallus gallus (Chicken).